A 184-amino-acid polypeptide reads, in one-letter code: MGSNVTPPGDGTLQYSLIMQHLVGDKRRPVELIPGGLGGIPTPIKPEEQKMMERVMESCGFKAALACVGGFVLGGAFGVFTAGIDTNVGFDPKDPLRTPTAKEVLRDMGQRGMSYAKNFAIVGAMFSCTECLVESYRGKSDWKNSVMSGCITGGAIGFRAGLKAGVLGCGGFAAFSAVIDYYLR.

Cystine bridges form between cysteine 59-cysteine 131 and cysteine 150-cysteine 169. Helical transmembrane passes span 64-84, 115-133, and 160-180; these read ALAC…TAGI, YAKN…ECLV, and AGLK…AVID.

Belongs to the Tim17/Tim22/Tim23 family. Core component of the TIM22 complex.

It localises to the mitochondrion inner membrane. Its function is as follows. Essential core component of the TIM22 complex, a complex that mediates the import and insertion of multi-pass transmembrane proteins into the mitochondrial inner membrane. In the TIM22 complex, it constitutes the voltage-activated and signal-gated channel. Forms a twin-pore translocase that uses the membrane potential as external driving force in 2 voltage-dependent steps. This Xenopus laevis (African clawed frog) protein is Mitochondrial import inner membrane translocase subunit Tim22 (timm22).